Reading from the N-terminus, the 836-residue chain is Neuroligin-2 (836 aa).

The first 14 residues, 1 to 14, serve as a signal peptide directing secretion; it reads MWLLALCLVGLAGA. Topologically, residues 15 to 678 are extracellular; that stretch reads QRGGGGPGGG…DSRDYSTELS (664 aa). N-linked (GlcNAc...) asparagine glycosylation is found at N98 and N136. Disulfide bonds link C106-C141, C317-C328, and C487-C521. N522 is a glycosylation site (N-linked (GlcNAc...) asparagine). Residues 623–661 form a disordered region; sequence PPYATRWPPRTPGPGTSGTRRPPPPATLPPESDIDLGPR. A helical transmembrane segment spans residues 679-699; that stretch reads VTVAVGASLLFLNILAFAALY. The tract at residues 679-699 is required for interaction with LHFPL4; the sequence is VTVAVGASLLFLNILAFAALY. At 700-836 the chain is on the cytoplasmic side; sequence YKRDRRQELR…LPHPHSTTRV (137 aa). Disordered regions lie at residues 711-735 and 791-836; these read RRLS…TAGR and LLPS…TTRV. S714 and S719 each carry phosphoserine. Gly residues predominate over residues 717 to 728; the sequence is GGSGSGVPGGGP. Positions 796–819 are enriched in pro residues; it reads LGPPPPPPPPSLHPFGPFPPPPPT. Residues 824 to 836 are compositionally biased toward polar residues; the sequence is NNTLPHPHSTTRV.

Belongs to the type-B carboxylesterase/lipase family. As to quaternary structure, interacts with neurexins NRXN1, NRXN2 and NRXN3. Interaction with neurexins is mediated by heparan sulfate glycan modification on neurexin. Interacts (via its C-terminus) with DLG4/PSD-95 (via PDZ domain 3). Interacts with PATJ. Interacts with GPHN. Interacts with MDGA1 and MDGA2. Found in a complex with MAGI2 and IGSF9B, where it interacts with MAGI2 (via WW 1, WW 2 and PDZ 2 domains). Identified in a complex of 720 kDa composed of LHFPL4, NLGN2, GABRA1, GABRB2, GABRG2 and GABRB3. Interacts with LHFPL4; leading to mutual regulation of the protein level and synaptic clustering. Interacts with GABRA1. As to expression, detected on hippocampus neurons, especially at inhibitory synapses. Detected in retina, in the outer and inner plexiform layer. Detected in pancreas, in islet of Langerhans beta cells (at protein level). Expressed in brain, spinal cord and dorsal root ganglion. Detected in brain, and at lower levels in pancreas islet beta cells.

Its subcellular location is the cell membrane. The protein resides in the postsynaptic cell membrane. The protein localises to the presynaptic cell membrane. Transmembrane scaffolding protein involved in cell-cell interactions via its interactions with neurexin family members. Mediates cell-cell interactions both in neurons and in other types of cells, such as Langerhans beta cells. Plays a role in synapse function and synaptic signal transmission, especially via gamma-aminobutyric acid receptors (GABA(A) receptors). Functions by recruiting and clustering synaptic proteins. Promotes clustering of postsynaptic GABRG2 and GPHN. Promotes clustering of postsynaptic LHFPL4. Modulates signaling by inhibitory synapses, and thereby plays a role in controlling the ratio of signaling by excitatory and inhibitory synapses and information processing. Required for normal signal amplitude from inhibitory synapses, but is not essential for normal signal frequency. May promote the initial formation of synapses, but is not essential for this. In vitro, triggers the de novo formation of presynaptic structures. Mediates cell-cell interactions between Langerhans beta cells and modulates insulin secretion. This chain is Neuroligin-2 (Nlgn2), found in Rattus norvegicus (Rat).